A 504-amino-acid chain; its full sequence is Maturase K (504 aa).

The protein belongs to the intron maturase 2 family. MatK subfamily.

It is found in the plastid. The protein resides in the chloroplast. In terms of biological role, usually encoded in the trnK tRNA gene intron. Probably assists in splicing its own and other chloroplast group II introns. The sequence is that of Maturase K from Carpinus betulus (European hornbeam).